Here is a 130-residue protein sequence, read N- to C-terminus: DNA-directed RNA polymerase subunit omega (130 aa).

Disordered stretches follow at residues 80–99 (PEPD…DADD) and 110–130 (EELL…EEDE). A compositionally biased stretch (basic and acidic residues) spans 110 to 124 (EELLKGLEGLAPREE).

It belongs to the RNA polymerase subunit omega family. The RNAP catalytic core consists of 2 alpha, 1 beta, 1 beta' and 1 omega subunit. When a sigma factor is associated with the core the holoenzyme is formed, which can initiate transcription.

The enzyme catalyses RNA(n) + a ribonucleoside 5'-triphosphate = RNA(n+1) + diphosphate. In terms of biological role, promotes RNA polymerase assembly. Latches the N- and C-terminal regions of the beta' subunit thereby facilitating its interaction with the beta and alpha subunits. The protein is DNA-directed RNA polymerase subunit omega of Nitrobacter hamburgensis (strain DSM 10229 / NCIMB 13809 / X14).